We begin with the raw amino-acid sequence, 363 residues long: NAD(P)H-quinone oxidoreductase subunit 1, chloroplastic (363 aa).

6 helical membrane-spanning segments follow: residues 30–50, 98–118, 127–147, 248–268, 300–320, and 336–356; these read LVPIFTPVSGITIGVLVIVWL, FSIGPSIAVISILLSYSVIPF, LSIGVFLWIAISSIAPIGLLM, YSGIKFGLFYVASYLNLLVSS, VFGTTIGILITLAKAYLFLFI, and LLNLGWKFLLPISLGNLLLTT.

The protein belongs to the complex I subunit 1 family. In terms of assembly, NDH is composed of at least 16 different subunits, 5 of which are encoded in the nucleus.

The protein resides in the plastid. It is found in the chloroplast thylakoid membrane. The catalysed reaction is a plastoquinone + NADH + (n+1) H(+)(in) = a plastoquinol + NAD(+) + n H(+)(out). It carries out the reaction a plastoquinone + NADPH + (n+1) H(+)(in) = a plastoquinol + NADP(+) + n H(+)(out). Its function is as follows. NDH shuttles electrons from NAD(P)H:plastoquinone, via FMN and iron-sulfur (Fe-S) centers, to quinones in the photosynthetic chain and possibly in a chloroplast respiratory chain. The immediate electron acceptor for the enzyme in this species is believed to be plastoquinone. Couples the redox reaction to proton translocation, and thus conserves the redox energy in a proton gradient. The chain is NAD(P)H-quinone oxidoreductase subunit 1, chloroplastic from Drimys granadensis.